Here is a 299-residue protein sequence, read N- to C-terminus: HTH-type transcriptional regulator CysL (299 aa).

One can recognise an HTH lysR-type domain in the interval 1-58 (MYYDVLKTFIAVVEEKNFTKAAEKLMISQPSVSLHIKNLEKEFQTALLNRSPKHFTTT). The H-T-H motif DNA-binding region spans 18–37 (FTKAAEKLMISQPSVSLHIK).

Belongs to the LysR transcriptional regulatory family.

Functionally, transcriptional activator of the cysJI operon which is involved in sulfur assimilation. Also negatively regulates its own transcription. This chain is HTH-type transcriptional regulator CysL (cysL), found in Bacillus subtilis (strain 168).